A 568-amino-acid polypeptide reads, in one-letter code: Proline--tRNA ligase (568 aa).

The protein belongs to the class-II aminoacyl-tRNA synthetase family. ProS type 1 subfamily. Homodimer.

It localises to the cytoplasm. It catalyses the reaction tRNA(Pro) + L-proline + ATP = L-prolyl-tRNA(Pro) + AMP + diphosphate. Functionally, catalyzes the attachment of proline to tRNA(Pro) in a two-step reaction: proline is first activated by ATP to form Pro-AMP and then transferred to the acceptor end of tRNA(Pro). As ProRS can inadvertently accommodate and process non-cognate amino acids such as alanine and cysteine, to avoid such errors it has two additional distinct editing activities against alanine. One activity is designated as 'pretransfer' editing and involves the tRNA(Pro)-independent hydrolysis of activated Ala-AMP. The other activity is designated 'posttransfer' editing and involves deacylation of mischarged Ala-tRNA(Pro). The misacylated Cys-tRNA(Pro) is not edited by ProRS. The sequence is that of Proline--tRNA ligase from Halothermothrix orenii (strain H 168 / OCM 544 / DSM 9562).